A 335-amino-acid polypeptide reads, in one-letter code: Mevalonate kinase (335 aa).

111 to 121 is an ATP binding site; the sequence is PVGAGLGSSAA. Residue Asp162 is the Proton acceptor of the active site.

It belongs to the GHMP kinase family. Mevalonate kinase subfamily. In terms of assembly, homodimer. Requires Mg(2+) as cofactor.

Its subcellular location is the cytoplasm. It carries out the reaction (R)-mevalonate + ATP = (R)-5-phosphomevalonate + ADP + H(+). The protein operates within isoprenoid biosynthesis; isopentenyl diphosphate biosynthesis via mevalonate pathway; isopentenyl diphosphate from (R)-mevalonate: step 1/3. Catalyzes the phosphorylation of (R)-mevalonate (MVA) to (R)-mevalonate 5-phosphate (MVAP). Functions in the mevalonate (MVA) pathway leading to isopentenyl diphosphate (IPP), a key precursor for the biosynthesis of isoprenoid compounds such as archaeal membrane lipids. In Pyrococcus abyssi (strain GE5 / Orsay), this protein is Mevalonate kinase.